The sequence spans 333 residues: Flap endonuclease 1 (333 aa).

An N-domain region spans residues Met1 to Arg99. Residues Asp28, Asp81, Glu153, Glu155, Asp174, Asp176, and Asp235 each contribute to the Mg(2+) site. Residues Glu117–Gly256 are I-domain. The interaction with PCNA stretch occupies residues Gly325–Phe333.

The protein belongs to the XPG/RAD2 endonuclease family. FEN1 subfamily. In terms of assembly, interacts with PCNA. PCNA stimulates the nuclease activity without altering cleavage specificity. The cofactor is Mg(2+).

Structure-specific nuclease with 5'-flap endonuclease and 5'-3' exonuclease activities involved in DNA replication and repair. During DNA replication, cleaves the 5'-overhanging flap structure that is generated by displacement synthesis when DNA polymerase encounters the 5'-end of a downstream Okazaki fragment. Binds the unpaired 3'-DNA end and kinks the DNA to facilitate 5' cleavage specificity. Cleaves one nucleotide into the double-stranded DNA from the junction in flap DNA, leaving a nick for ligation. Also involved in the base excision repair (BER) pathway. Acts as a genome stabilization factor that prevents flaps from equilibrating into structures that lead to duplications and deletions. Also possesses 5'-3' exonuclease activity on nicked or gapped double-stranded DNA. This is Flap endonuclease 1 from Methanoregula boonei (strain DSM 21154 / JCM 14090 / 6A8).